The sequence spans 167 residues: Translationally-controlled tumor protein homolog (167 aa).

One can recognise a TCTP domain in the interval 1–167 (MIIFKDVISN…WKHGIKEEKI (167 aa)).

This sequence belongs to the TCTP family.

The protein localises to the cytoplasm. It localises to the cytoskeleton. In terms of biological role, involved in protein synthesis. Involved in microtubule stabilization. The protein is Translationally-controlled tumor protein homolog of Yarrowia lipolytica (strain CLIB 122 / E 150) (Yeast).